The primary structure comprises 223 residues: AN1-type zinc finger protein 6 (223 aa).

Residues 8 to 42 (SQAPMLCSTGCGFYGNPRTNGMCSVCYKEHLQRQN) form an A20-type zinc finger. Positions 14, 18, 30, and 33 each coordinate Zn(2+). The segment at 41 to 155 (QNSSNGRISP…PSEEQSKSLE (115 aa)) is disordered. S49 carries the post-translational modification Phosphoserine. 2 stretches are compositionally biased toward polar residues: residues 77-110 (ALDSTSSSMQPGPVSNQSLLSESVAPSQVDSTSV) and 137-148 (SSVSDTTQQPSE). The AN1-type zinc finger occupies 158–204 (KQKKNRCFMCRKKVGLTGFECRCGNVYCGVHRYSDVHNCSYNYKADA). Residues C164, C167, C178, C180, C185, H188, H194, and C196 each contribute to the Zn(2+) site. The residue at position 219 (K219) is an N6-acetyllysine.

In terms of assembly, interacts with PKN1. Interacts with TRAF2. Interacts with mono- and polyubiquitin. Interacts with PEX6. Interacts with PEX5 (Cys-linked ubiquitinated).

It localises to the cytoplasm. In terms of biological role, involved in regulation of TNF-alpha induced NF-kappa-B activation and apoptosis. Involved in modulation of 'Lys-48'-linked polyubiquitination status of TRAF2 and decreases association of TRAF2 with RIPK1. Required for PTS1 target sequence-dependent protein import into peroxisomes and PEX5 stability; may cooperate with PEX6. In vitro involved in PEX5 export from the cytosol to peroxisomes. The polypeptide is AN1-type zinc finger protein 6 (Zfand6) (Mus musculus (Mouse)).